Here is a 320-residue protein sequence, read N- to C-terminus: Cytochrome f (320 aa).

The N-terminal stretch at 1–36 (MKHTNSKQKLKDIINFCQAIFTLCIICLYQANISNS) is a signal peptide. Residues tyrosine 37, cysteine 57, cysteine 60, and histidine 61 each coordinate heme. The helical transmembrane segment at 286–305 (LISFIFFSISVLISQLFFVL) threads the bilayer.

It belongs to the cytochrome f family. As to quaternary structure, the 4 large subunits of the cytochrome b6-f complex are cytochrome b6, subunit IV (17 kDa polypeptide, petD), cytochrome f and the Rieske protein, while the 4 small subunits are PetG, PetL, PetM and PetN. The complex functions as a dimer. The cofactor is heme.

It is found in the plastid. The protein resides in the chloroplast thylakoid membrane. Component of the cytochrome b6-f complex, which mediates electron transfer between photosystem II (PSII) and photosystem I (PSI), cyclic electron flow around PSI, and state transitions. In Cyanidium caldarium (Red alga), this protein is Cytochrome f (petA).